We begin with the raw amino-acid sequence, 421 residues long: Gamma-glutamyl phosphate reductase (421 aa).

Belongs to the gamma-glutamyl phosphate reductase family.

It localises to the cytoplasm. It carries out the reaction L-glutamate 5-semialdehyde + phosphate + NADP(+) = L-glutamyl 5-phosphate + NADPH + H(+). It functions in the pathway amino-acid biosynthesis; L-proline biosynthesis; L-glutamate 5-semialdehyde from L-glutamate: step 2/2. Functionally, catalyzes the NADPH-dependent reduction of L-glutamate 5-phosphate into L-glutamate 5-semialdehyde and phosphate. The product spontaneously undergoes cyclization to form 1-pyrroline-5-carboxylate. The protein is Gamma-glutamyl phosphate reductase of Herminiimonas arsenicoxydans.